Reading from the N-terminus, the 599-residue chain is Cytosolic Fe-S cluster assembly factor nar1 (599 aa).

[4Fe-4S] cluster-binding residues include C20, C62, C65, C68, C210, C265, C468, and C472.

This sequence belongs to the NARF family.

Functionally, component of the cytosolic Fe/S protein assembly machinery. Required for maturation of extramitochondrial Fe/S proteins. May play a role in the transfer of pre-assembled Fe/S clusters to target apoproteins. This chain is Cytosolic Fe-S cluster assembly factor nar1 (nar1), found in Aspergillus terreus (strain NIH 2624 / FGSC A1156).